The sequence spans 190 residues: Large ribosomal subunit protein uL6A (190 aa).

It belongs to the universal ribosomal protein uL6 family. Component of the large ribosomal subunit (LSU). Mature yeast ribosomes consist of a small (40S) and a large (60S) subunit. The 40S small subunit contains 1 molecule of ribosomal RNA (18S rRNA) and at least 33 different proteins. The large 60S subunit contains 3 rRNA molecules (25S, 5.8S and 5S rRNA) and at least 46 different proteins. uL6 lines the binding pocket for eukaryotic elongation factor 2 (eEF2).

The protein localises to the cytoplasm. The protein resides in the nucleus. Functionally, component of the ribosome, a large ribonucleoprotein complex responsible for the synthesis of proteins in the cell. The small ribosomal subunit (SSU) binds messenger RNAs (mRNAs) and translates the encoded message by selecting cognate aminoacyl-transfer RNA (tRNA) molecules. The large subunit (LSU) contains the ribosomal catalytic site termed the peptidyl transferase center (PTC), which catalyzes the formation of peptide bonds, thereby polymerizing the amino acids delivered by tRNAs into a polypeptide chain. The nascent polypeptides leave the ribosome through a tunnel in the LSU and interact with protein factors that function in enzymatic processing, targeting, and the membrane insertion of nascent chains at the exit of the ribosomal tunnel. The polypeptide is Large ribosomal subunit protein uL6A (rpl901) (Schizosaccharomyces pombe (strain 972 / ATCC 24843) (Fission yeast)).